The primary structure comprises 265 residues: Transcriptional activator TAF-1 (265 aa).

Disordered stretches follow at residues 1 to 133 (AHGG…SEKA) and 167 to 218 (THLK…KQAE). Low complexity predominate over residues 35–46 (ASLSLDASAKSS). 2 stretches are compositionally biased toward basic and acidic residues: residues 103 to 115 (RETT…DSKS) and 191 to 209 (NERE…ESAR). Residues 194–257 (ELKREKRKQS…EKLKLENAAL (64 aa)) form the bZIP domain. The segment at 196–215 (KREKRKQSNRESARRSRLRK) is basic motif. A leucine-zipper region spans residues 222–257 (LAIRVQSLTAENMTLKSEINKLMENSEKLKLENAAL).

It belongs to the bZIP family. Present mainly in roots. Barely detectable in stems and leaves.

The protein localises to the nucleus. Trans-activator of a beta-glucuronidase (GUS) reporter gene. Binds to a G-box-related element, (5'-GCAACGTGGC-3'). Also binds to the HEX-motif of wheat histone H3 promoter. The sequence is that of Transcriptional activator TAF-1 (TAF1) from Nicotiana tabacum (Common tobacco).